Reading from the N-terminus, the 332-residue chain is D-lactate dehydrogenase (332 aa).

Residues 155 to 156, Asp175, 206 to 207, Asn212, and 233 to 235 contribute to the NAD(+) site; these read RI, VP, and FAR. Catalysis depends on residues Arg235 and Glu264. His296 (proton donor) is an active-site residue.

This sequence belongs to the D-isomer specific 2-hydroxyacid dehydrogenase family. As to quaternary structure, homodimer.

It catalyses the reaction (R)-lactate + NAD(+) = pyruvate + NADH + H(+). This chain is D-lactate dehydrogenase, found in Lactiplantibacillus pentosus (Lactobacillus pentosus).